We begin with the raw amino-acid sequence, 339 residues long: UDP-N-acetylenolpyruvoylglucosamine reductase (339 aa).

In terms of domain architecture, FAD-binding PCMH-type spans 19-189 (VDVRAQLFAE…LRVRFALNRV (171 aa)). Arginine 166 is a catalytic residue. The active-site Proton donor is the serine 239. Glutamate 335 is a catalytic residue.

This sequence belongs to the MurB family. Requires FAD as cofactor.

It is found in the cytoplasm. The catalysed reaction is UDP-N-acetyl-alpha-D-muramate + NADP(+) = UDP-N-acetyl-3-O-(1-carboxyvinyl)-alpha-D-glucosamine + NADPH + H(+). It functions in the pathway cell wall biogenesis; peptidoglycan biosynthesis. In terms of biological role, cell wall formation. The polypeptide is UDP-N-acetylenolpyruvoylglucosamine reductase (Pseudomonas fluorescens (strain Pf0-1)).